The sequence spans 276 residues: Inositol-1-monophosphatase ImpA (276 aa).

Residues Glu74, Asp90, Ile92, and Asp93 each contribute to the Mg(2+) site. Glu74 is a substrate binding site. Substrate-binding positions include Ile92–Thr95, Arg192, and Asp221. A Mg(2+)-binding site is contributed by Asp221.

This sequence belongs to the inositol monophosphatase superfamily. Mg(2+) serves as cofactor.

It carries out the reaction a myo-inositol phosphate + H2O = myo-inositol + phosphate. Its pathway is polyol metabolism; myo-inositol biosynthesis; myo-inositol from D-glucose 6-phosphate: step 2/2. Catalyzes the dephosphorylation of inositol 1-phosphate (I-1-P) to yield free myo-inositol, a key metabolite in mycobacteria. The sequence is that of Inositol-1-monophosphatase ImpA (impA) from Mycolicibacterium smegmatis (strain ATCC 700084 / mc(2)155) (Mycobacterium smegmatis).